The primary structure comprises 87 residues: Phytosulfokines 2 (87 aa).

Residues 1–22 (MANVSALLTIALLLCSTLMCTA) form the signal peptide. The propeptide occupies 23–77 (RPEPAISISITTAADPCNMEKKIEGKLDDMHMVDENCGADDEDCLMRRTLVAHTD). 2 positions are modified to sulfotyrosine: tyrosine 78 and tyrosine 80. The propeptide occupies 83 to 87 (KKKHP).

It belongs to the phytosulfokine family. Sulfation is important for activity and for the binding to a putative membrane receptor. Post-translationally, PSK-beta is an enzymatic derivative of PSK-alpha. As to expression, expressed in stems, roots and leaves.

The protein resides in the secreted. Promotes plant cell differentiation, organogenesis and somatic embryogenesis as well as cell proliferation. The chain is Phytosulfokines 2 (PSK2) from Arabidopsis thaliana (Mouse-ear cress).